Consider the following 262-residue polypeptide: Shikimate dehydrogenase (NADP(+)) (262 aa).

Residues 15–17 (SRS) and Thr62 contribute to the shikimate site. Lys66 serves as the catalytic Proton acceptor. Glu78 contacts NADP(+). The shikimate site is built by Asn87 and Asp102. NADP(+)-binding positions include 126–130 (GAGGA), 150–155 (NRTLAR), and Met214. Tyr216 is a binding site for shikimate. Residue Gly236 coordinates NADP(+).

The protein belongs to the shikimate dehydrogenase family. In terms of assembly, homodimer.

The enzyme catalyses shikimate + NADP(+) = 3-dehydroshikimate + NADPH + H(+). Its pathway is metabolic intermediate biosynthesis; chorismate biosynthesis; chorismate from D-erythrose 4-phosphate and phosphoenolpyruvate: step 4/7. Involved in the biosynthesis of the chorismate, which leads to the biosynthesis of aromatic amino acids. Catalyzes the reversible NADPH linked reduction of 3-dehydroshikimate (DHSA) to yield shikimate (SA). The polypeptide is Shikimate dehydrogenase (NADP(+)) (Acinetobacter baumannii (strain AB307-0294)).